A 388-amino-acid polypeptide reads, in one-letter code: MEALLSSTTLQLKPLHPPSSFSSLHSPFSSISVLRVKGSKKAETFIQRSNFSTVLPLRVSASSQAAAAETSTSISIPSEMKAWSYTDYGSVDVLKLESNVAVPDIKEDQVLIKIVAAALNPVDFKRRLGKFKATDSPLPTVPGYDVAGVVVKVGSQVKGLKEGDEVYGDIHEKALDGPKQFGSLAEYTAVEEKLVALKPKNLSFAEAAALPLAIETAYEGLEKAGFSSGKSILVLGGAGGVGSLVIQLAKHVFGASKVAATSSTGKLELLKSLGADLAIDYTKENFEDLPDKFDVVYDSVGQGEKAVKVVKEGGSVVVLTGAVTPPGFRFVVTSNGEMLKKLNPYLESGKVKPVIDPKGPFSFDKVVDAFSYLETGRATGKVVIHPIP.

A chloroplast-targeting transit peptide spans 1 to 60; that stretch reads MEALLSSTTLQLKPLHPPSSFSSLHSPFSSISVLRVKGSKKAETFIQRSNFSTVLPLRVS. NADP(+) is bound by residues Lys125, 240–241, 263–266, Tyr281, 330–332, and 377–378; these read GV, STGK, FVV, and RA. Lys125 lines the substrate pocket.

The protein belongs to the zinc-containing alcohol dehydrogenase family. Quinone oxidoreductase subfamily. As to quaternary structure, monomer.

It localises to the plastid. Its subcellular location is the chloroplast. The enzyme catalyses 4-hydroxy-2,5-dimethyl-furan-3(2H)-one + NADP(+) = 4-hydroxy-5-methyl-2-methylenefuran-3(2H)-one + NADPH + H(+). Its function is as follows. Enone oxidoreductase involved in the biosynthesis of 4-hydroxy-2,5-dimethyl-3(2H)-furanone (HDMF or furaneol). Can use both NADH and NADPH as the electron donor. This chain is 2-methylene-furan-3-one reductase (EO), found in Solanum lycopersicum (Tomato).